Consider the following 411-residue polypeptide: Glucose-1-phosphate adenylyltransferase (411 aa).

Residues Gly-161, 176 to 177, and Ser-195 each bind alpha-D-glucose 1-phosphate; that span reads EK.

It belongs to the bacterial/plant glucose-1-phosphate adenylyltransferase family. Homotetramer.

The enzyme catalyses alpha-D-glucose 1-phosphate + ATP + H(+) = ADP-alpha-D-glucose + diphosphate. It participates in glycan biosynthesis; glycogen biosynthesis. In terms of biological role, involved in the biosynthesis of ADP-glucose, a building block required for the elongation reactions to produce glycogen. Catalyzes the reaction between ATP and alpha-D-glucose 1-phosphate (G1P) to produce pyrophosphate and ADP-Glc. The chain is Glucose-1-phosphate adenylyltransferase from Anaeromyxobacter sp. (strain Fw109-5).